A 226-amino-acid chain; its full sequence is Imidazoleglycerol-phosphate dehydratase (226 aa).

The tract at residues leucine 23–alanine 55 is disordered.

This sequence belongs to the imidazoleglycerol-phosphate dehydratase family.

The enzyme catalyses D-erythro-1-(imidazol-4-yl)glycerol 3-phosphate = 3-(imidazol-4-yl)-2-oxopropyl phosphate + H2O. It functions in the pathway amino-acid biosynthesis; L-histidine biosynthesis; L-histidine from 5-phospho-alpha-D-ribose 1-diphosphate: step 6/9. The chain is Imidazoleglycerol-phosphate dehydratase (HIS3) from Maudiozyma humilis (Sour dough yeast).